The following is a 363-amino-acid chain: 3-dehydroquinate synthase (363 aa).

NAD(+) contacts are provided by residues 72–77 (SGEQSK), 106–110 (GVIGD), 130–131 (TT), K142, and K151. 3 residues coordinate Zn(2+): E184, H246, and H263.

This sequence belongs to the sugar phosphate cyclases superfamily. Dehydroquinate synthase family. It depends on Co(2+) as a cofactor. The cofactor is Zn(2+). Requires NAD(+) as cofactor.

It localises to the cytoplasm. The catalysed reaction is 7-phospho-2-dehydro-3-deoxy-D-arabino-heptonate = 3-dehydroquinate + phosphate. It participates in metabolic intermediate biosynthesis; chorismate biosynthesis; chorismate from D-erythrose 4-phosphate and phosphoenolpyruvate: step 2/7. Functionally, catalyzes the conversion of 3-deoxy-D-arabino-heptulosonate 7-phosphate (DAHP) to dehydroquinate (DHQ). This Bacillus pumilus (strain SAFR-032) protein is 3-dehydroquinate synthase.